The chain runs to 570 residues: MTLLWCVVSLYFYGILQSDASERCDDWGLDTMRQIQVFEDEPARIKCPLFEHFLKFNYSTAHSAGLTLIWYWTRQDRDLEEPINFRLPENRISKEKDVLWFRPTLLNDTGNYTCMLRNTTYCSKVAFPLEVVQKDSCFNSPMKLPVHKLYIEYGIQRITCPNVDGYFPSSVKPTITWYMGCYKIQNFNNVIPEGMNLSFLIAFISNNGNYTCVVTYPENGRTFHLTRTLTVKVVGSPKNAVPPVIHSPNDHVVYEKEPGEELLIPCTVYFSFLMDSRNEVWWTIDGKKPDDIPIDVTINESISHSRTEDETRTQILSIKKVTSEDLKRSYVCHARSAKGEVAKAATVKQKVPAPRYTVELACGFGATVLLVVILIVVYHVYWLEMVLFYRAHFGTDETILDGKEYDIYVSYARNAEEEEFVLLTLRGVLENEFGYKLCIFDRDSLPGGIVTDETLSFIQKSRRLLVVLSPNYVLQGTQALLELKAGLENMASQGNINVILVQYKAVKETKVKELKRAKTVLTVIKWKGEKSKYPQGRFWKQLQVAMPVKKSPRRSSSDEQGLSYSSLKNV.

The N-terminal stretch at 1-20 (MTLLWCVVSLYFYGILQSDA) is a signal peptide. Ig-like C2-type domains follow at residues 21–128 (SERC…VAFP), 136–226 (SCFN…FHLT), and 242–350 (PPVI…VKQK). The Extracellular segment spans residues 21–367 (SERCDDWGLD…VELACGFGAT (347 aa)). Disulfide bonds link cysteine 24–cysteine 122, cysteine 47–cysteine 114, cysteine 137–cysteine 181, cysteine 160–cysteine 212, and cysteine 266–cysteine 332. N-linked (GlcNAc...) asparagine glycosylation occurs at asparagine 57. The interval 69 to 85 (IWYWTRQDRDLEEPINF) is essential for interaction with PTPRD. Asparagine 107, asparagine 111, and asparagine 118 each carry an N-linked (GlcNAc...) asparagine glycan. N-linked (GlcNAc...) asparagine glycosylation is found at asparagine 196, asparagine 209, and asparagine 299. Residues 368–388 (VLLVVILIVVYHVYWLEMVLF) traverse the membrane as a helical segment. Residues 389–570 (YRAHFGTDET…GLSYSSLKNV (182 aa)) are Cytoplasmic-facing. The TIR domain occupies 403-546 (KEYDIYVSYA…RFWKQLQVAM (144 aa)). The active site involves glutamate 482. The segment at 549–570 (KKSPRRSSSDEQGLSYSSLKNV) is disordered. The residue at position 557 (serine 557) is a Phosphoserine. Polar residues predominate over residues 558-570 (DEQGLSYSSLKNV).

It belongs to the interleukin-1 receptor family. As to quaternary structure, the interleukin-36 receptor complex is a heterodimer of IL1RL2 and IL1RAP; the association is inhibited by IL36RN. The interleukin-1 receptor complex is a heterodimer of IL1R1 and IL1RAP. Associates with IL1R2 to form a non-signaling interleukin-1 receptor complex. Interacts with IL-33-bound IL1RL1 to form the minimal interleukin-33 signaling complex with a 1:1:1 stoichiometry. Interacts with KIT (independently of stimulation with KITLG/SCF). A mast cell-specific KITLG/SCF-induced interleukin-33 signaling complex contains IL1RL1, IL1RAP, KIT and MYD88. Interacts (via the first immunoglobilin domain) with PTPRD (via the third immunoglobilin domain); induces pre- and postsynaptic differentiation of neurons.

The protein resides in the cell membrane. It localises to the secreted. It carries out the reaction NAD(+) + H2O = ADP-D-ribose + nicotinamide + H(+). Its function is as follows. Coreceptor for IL1RL2 in the IL-36 signaling system. Coreceptor with IL1R1 in the IL-1 signaling system. Associates with IL1R1 bound to IL1B to form the high affinity interleukin-1 receptor complex which mediates interleukin-1-dependent activation of NF-kappa-B and other pathways. Signaling involves the recruitment of adapter molecules such as TOLLIP, MYD88, and IRAK1 or IRAK2 via the respective TIR domains of the receptor/coreceptor subunits. Recruits TOLLIP to the signaling complex. Does not bind to interleukin-1 alone; binding of IL1RN to IL1R1, prevents its association with IL1R1 to form a signaling complex. The cellular response is modulated through a non-signaling association with the membrane IL1R2 decoy receptor. Coreceptor for IL1RL1 in the IL-33 signaling system. Can bidirectionally induce pre- and postsynaptic differentiation of neurons by trans-synaptically binding to PTPRD. May play a role in IL1B-mediated costimulation of IFNG production from T-helper 1 (Th1) cells. In terms of biological role, associates with secreted ligand-bound IL1R2 and increases the affinity of secreted IL1R2 for IL1B; this complex formation may be the dominant mechanism for neutralization of IL1B by secreted/soluble receptors. Enhances the ability of secreted IL1R1 to inhibit IL-33 signaling. The chain is Interleukin-1 receptor accessory protein (IL1RAP) from Macaca mulatta (Rhesus macaque).